Reading from the N-terminus, the 360-residue chain is MRVFNFSAGPAAMPEEVLRQAADEMLDWQGSGMSVMEMSHRGKEFMSIHEEALVDLRDLLEVPASHRILFLQGGGLGENAIVPMNLMGAKPRADFVVTGSWSQKSFKEAQKYGTVHLAASGQTAEGFTRAPARSEWQLSDDPAYVHLCTNETIHGVETFEIPDLGDIPLVADASSHILSRPMDIAKYGVLFGGAQKNIGMAGVTVVIVREDMLDRAQSICPSAFEWKTVAENNSMYNTPPTYAIYIAGLVFKWLKKQGGLAAMEARNVEKSKLLYDAVDTSSFYLNKVERGSRSRMNVPFFLADESRNEDFLAGAKARGMVQLKGHKSVGGMRASIYNAVPLEGVKALVEYMKEFEQRSA.

Position 41 (Arg41) interacts with L-glutamate. Pyridoxal 5'-phosphate contacts are provided by Trp101, Thr152, Asp172, and Gln195. Residue Lys196 is modified to N6-(pyridoxal phosphate)lysine. A pyridoxal 5'-phosphate-binding site is contributed by 237 to 238; that stretch reads NT.

The protein belongs to the class-V pyridoxal-phosphate-dependent aminotransferase family. SerC subfamily. Homodimer. Pyridoxal 5'-phosphate serves as cofactor.

The protein resides in the cytoplasm. The catalysed reaction is O-phospho-L-serine + 2-oxoglutarate = 3-phosphooxypyruvate + L-glutamate. It catalyses the reaction 4-(phosphooxy)-L-threonine + 2-oxoglutarate = (R)-3-hydroxy-2-oxo-4-phosphooxybutanoate + L-glutamate. It functions in the pathway amino-acid biosynthesis; L-serine biosynthesis; L-serine from 3-phospho-D-glycerate: step 2/3. The protein operates within cofactor biosynthesis; pyridoxine 5'-phosphate biosynthesis; pyridoxine 5'-phosphate from D-erythrose 4-phosphate: step 3/5. Its function is as follows. Catalyzes the reversible conversion of 3-phosphohydroxypyruvate to phosphoserine and of 3-hydroxy-2-oxo-4-phosphonooxybutanoate to phosphohydroxythreonine. The sequence is that of Phosphoserine aminotransferase from Paraburkholderia phytofirmans (strain DSM 17436 / LMG 22146 / PsJN) (Burkholderia phytofirmans).